A 415-amino-acid chain; its full sequence is MDVNGHPKFQPSPETDGPLPLTSSTLMVSKSLQQDSLSMVGDRLPPKTGAVVIDMGTGTCKVGFAGQSQPTYTVATILGCQPKKQATKDQSELETFIGEAARSRPELRLVKPIRNGIVVDWEAAELIWRHILEHDLQVATHEHPLLFSDPPFSPATNREKLVEVAFESLHSPALYVASQSVLSVYAHGRVNGLVVDTGHGVSYTVPVVQGYNLPHAIQRLDLAGNHLTAFLAEMLLGSGFSLQQEDLDLVENIKHHYCYLAPDFQKEQARPDEECKQSLKLPDGRTVTLGKELFQCPELLFHPPEIPGLSPIGLPAMAEQSLLKVPQELRPHVARNVILCGGSSLFTGLEGRFRAELLHSLSPEDHVVVMAHPNRNLSVWIGGSILASLHAFQSCWVLREQYEERGPQVVYRKCY.

The interval 1-22 (MDVNGHPKFQPSPETDGPLPLT) is disordered.

The protein belongs to the actin family. Interacts with ACTL7A.

The protein resides in the cytoplasmic vesicle. It is found in the secretory vesicle. Its subcellular location is the acrosome. It localises to the cytoplasm. The protein localises to the cytoskeleton. The protein resides in the perinuclear theca. Functionally, testis-specic protein that plays an important role in fusion of proacrosomal vesicles and perinuclear theca formation. The chain is Actin-like protein 9 (Actl9) from Mus musculus (Mouse).